A 188-amino-acid chain; its full sequence is MADNVFKSHDIGLRAQKKILSRMATKNIAKTFIDGTTASLLDNLYRLCKMHTGNKAKAEKLIKNIIKIVIKIGVLHRNNQFSDEELQKAELFKRKFQNTQLSIISFYEVDFTFDLPYLQKSIAESQVALKSIVQPHLTEKSLGRIDEVFDFFGEEALLETAFRPDSPYREVMGKIVADINAAMETGDI.

This sequence belongs to the TNFAIP8 family. Interacts with the Ste20-like MAP kinase msn.

The protein resides in the cytoplasm. Its subcellular location is the cytoskeleton. Important for modulating JNK signaling, cytoskeletal remodeling and autophagy in larval salivary glands. During salivary gland development, involved in the positive regulation of the JNK signaling pathway, acting downstream of the TNF ligand egr and upstream of bsk. This chain is Protein salivary glands marred, found in Drosophila melanogaster (Fruit fly).